Reading from the N-terminus, the 137-residue chain is Small ribosomal subunit protein uS11 (137 aa).

Residues 1–11 are compositionally biased toward polar residues; that stretch reads MPPKSRSTGPK. 2 disordered regions span residues 1 to 28 and 117 to 137; these read MPPK…PHGA and TISD…RRRV. Over residues 12–21 the composition is skewed to basic residues; the sequence is KTQKARRRDK.

The protein belongs to the universal ribosomal protein uS11 family. As to quaternary structure, part of the 30S ribosomal subunit. Interacts with proteins S7 and S18. Binds to IF-3.

Its function is as follows. Located on the platform of the 30S subunit, it bridges several disparate RNA helices of the 16S rRNA. Forms part of the Shine-Dalgarno cleft in the 70S ribosome. This chain is Small ribosomal subunit protein uS11, found in Rhodococcus opacus (strain B4).